A 314-amino-acid chain; its full sequence is Glutathione synthetase (314 aa).

The ATP-grasp domain occupies 125–309; it reads KLFVMNFPQL…VAAKVWDTIE (185 aa). 151–207 lines the ATP pocket; sequence RDKHGAVVMKPLHGHGGAAVFRVMPQDMNFGSLFDMFTVTFKEPWVIQQFIPEVKHG. Glu280 and Asn282 together coordinate Mg(2+).

Belongs to the prokaryotic GSH synthase family. The cofactor is Mg(2+). Requires Mn(2+) as cofactor.

It catalyses the reaction gamma-L-glutamyl-L-cysteine + glycine + ATP = glutathione + ADP + phosphate + H(+). It functions in the pathway sulfur metabolism; glutathione biosynthesis; glutathione from L-cysteine and L-glutamate: step 2/2. This is Glutathione synthetase from Bradyrhizobium diazoefficiens (strain JCM 10833 / BCRC 13528 / IAM 13628 / NBRC 14792 / USDA 110).